We begin with the raw amino-acid sequence, 318 residues long: Ribosomal protein L11 methyltransferase (318 aa).

S-adenosyl-L-methionine-binding residues include Thr161, Gly182, Asp204, and Asn247.

This sequence belongs to the methyltransferase superfamily. PrmA family.

The protein localises to the cytoplasm. The enzyme catalyses L-lysyl-[protein] + 3 S-adenosyl-L-methionine = N(6),N(6),N(6)-trimethyl-L-lysyl-[protein] + 3 S-adenosyl-L-homocysteine + 3 H(+). Its function is as follows. Methylates ribosomal protein L11. The sequence is that of Ribosomal protein L11 methyltransferase from Moorella thermoacetica (strain ATCC 39073 / JCM 9320).